A 432-amino-acid chain; its full sequence is Short/branched chain specific acyl-CoA dehydrogenase, mitochondrial (432 aa).

The N-terminal 33 residues, 1-33 (MERATVRLLRGGALLRRNFPSCLSSWKTPPHAL), are a transit peptide targeting the mitochondrion. Position 70 is an N6-acetyllysine; alternate (Lys70). N6-succinyllysine; alternate is present on Lys70. FAD contacts are provided by residues 174-183 (ICISETGAGS) and 207-209 (WIS). Residue Ser183 participates in substrate binding. At Ser183 the chain carries Phosphoserine. Substrate contacts are provided by Tyr229 and Tyr283. Lys284 is subject to N6-acetyllysine; alternate. An N6-succinyllysine; alternate modification is found at Lys284. Position 291 to 294 (291 to 294 (NEGR)) interacts with substrate. Residues Arg319, Gln330, and 387-391 (EWMGG) each bind FAD. Catalysis depends on Glu414, which acts as the Proton acceptor. FAD is bound at residue 416–418 (TSN). At Lys426 the chain carries N6-acetyllysine.

Belongs to the acyl-CoA dehydrogenase family. In terms of assembly, homotetramer. The cofactor is FAD.

The protein localises to the mitochondrion matrix. The catalysed reaction is 2-methylbutanoyl-CoA + oxidized [electron-transfer flavoprotein] + H(+) = (2E)-2-methylbut-2-enoyl-CoA + reduced [electron-transfer flavoprotein]. The enzyme catalyses (2S)-2-methylbutanoyl-CoA + oxidized [electron-transfer flavoprotein] + H(+) = (2E)-2-methylbut-2-enoyl-CoA + reduced [electron-transfer flavoprotein]. It carries out the reaction (2R)-2-methylbutanoyl-CoA + oxidized [electron-transfer flavoprotein] + H(+) = ethylacryloyl-CoA + reduced [electron-transfer flavoprotein]. It catalyses the reaction butanoyl-CoA + oxidized [electron-transfer flavoprotein] + H(+) = (2E)-butenoyl-CoA + reduced [electron-transfer flavoprotein]. The catalysed reaction is 2-methylpropanoyl-CoA + oxidized [electron-transfer flavoprotein] + H(+) = 2-methylpropenoyl-CoA + reduced [electron-transfer flavoprotein]. The enzyme catalyses hexanoyl-CoA + oxidized [electron-transfer flavoprotein] + H(+) = (2E)-hexenoyl-CoA + reduced [electron-transfer flavoprotein]. It carries out the reaction valproyl-CoA + oxidized [electron-transfer flavoprotein] + H(+) = (2E)-2-propylpent-2-enoyl-CoA + reduced [electron-transfer flavoprotein]. Its pathway is lipid metabolism; mitochondrial fatty acid beta-oxidation. It functions in the pathway amino-acid degradation; L-isoleucine degradation. Its function is as follows. Short and branched chain specific acyl-CoA dehydrogenase that catalyzes the removal of one hydrogen from C-2 and C-3 of the fatty acyl-CoA thioester, resulting in the formation of trans-2-enoyl-CoA. Among the different mitochondrial acyl-CoA dehydrogenases, acts specifically on short and branched chain acyl-CoA derivatives such as (S)-2-methylbutyryl-CoA as well as short straight chain acyl-CoAs such as butyryl-CoA. Plays an important role in the metabolism of L-isoleucine by catalyzing the dehydrogenation of 2-methylbutyryl-CoA, one of the steps of the L-isoleucine catabolic pathway. Can also act on valproyl-CoA, a metabolite of the valproic acid drug. The polypeptide is Short/branched chain specific acyl-CoA dehydrogenase, mitochondrial (ACADSB) (Bos taurus (Bovine)).